We begin with the raw amino-acid sequence, 263 residues long: uncharacterized protein (263 aa).

Belongs to the AtsA family.

It localises to the plastid. The protein localises to the chloroplast. This is an uncharacterized protein from Porphyra purpurea (Red seaweed).